We begin with the raw amino-acid sequence, 166 residues long: Large ribosomal subunit protein uL10 (166 aa).

Belongs to the universal ribosomal protein uL10 family. As to quaternary structure, part of the ribosomal stalk of the 50S ribosomal subunit. The N-terminus interacts with L11 and the large rRNA to form the base of the stalk. The C-terminus forms an elongated spine to which L12 dimers bind in a sequential fashion forming a multimeric L10(L12)X complex.

In terms of biological role, forms part of the ribosomal stalk, playing a central role in the interaction of the ribosome with GTP-bound translation factors. The chain is Large ribosomal subunit protein uL10 from Streptococcus sanguinis (strain SK36).